A 361-amino-acid polypeptide reads, in one-letter code: Peptide chain release factor 1 (361 aa).

At Q237 the chain carries N5-methylglutamine. Residues 287–306 form a disordered region; sequence KRAAEEASTRKSLVGSGDRS.

The protein belongs to the prokaryotic/mitochondrial release factor family. In terms of processing, methylated by PrmC. Methylation increases the termination efficiency of RF1.

The protein resides in the cytoplasm. Functionally, peptide chain release factor 1 directs the termination of translation in response to the peptide chain termination codons UAG and UAA. This is Peptide chain release factor 1 from Alteromonas mediterranea (strain DSM 17117 / CIP 110805 / LMG 28347 / Deep ecotype).